Here is a 474-residue protein sequence, read N- to C-terminus: tRNA-2-methylthio-N(6)-dimethylallyladenosine synthase (474 aa).

Residues 3–120 (KKLHIKTWGC…LPEMIEQVRR (118 aa)) enclose the MTTase N-terminal domain. Residues Cys-12, Cys-49, Cys-83, Cys-157, Cys-161, and Cys-164 each contribute to the [4Fe-4S] cluster site. The region spanning 143 to 375 (RAEGPTAFVS…QDRITQQAMR (233 aa)) is the Radical SAM core domain. In terms of domain architecture, TRAM spans 378–441 (RHMMGTVQRI…TNSLRGVFIR (64 aa)).

This sequence belongs to the methylthiotransferase family. MiaB subfamily. In terms of assembly, monomer. Requires [4Fe-4S] cluster as cofactor.

The protein resides in the cytoplasm. The catalysed reaction is N(6)-dimethylallyladenosine(37) in tRNA + (sulfur carrier)-SH + AH2 + 2 S-adenosyl-L-methionine = 2-methylsulfanyl-N(6)-dimethylallyladenosine(37) in tRNA + (sulfur carrier)-H + 5'-deoxyadenosine + L-methionine + A + S-adenosyl-L-homocysteine + 2 H(+). Functionally, catalyzes the methylthiolation of N6-(dimethylallyl)adenosine (i(6)A), leading to the formation of 2-methylthio-N6-(dimethylallyl)adenosine (ms(2)i(6)A) at position 37 in tRNAs that read codons beginning with uridine. This Shewanella baltica (strain OS185) protein is tRNA-2-methylthio-N(6)-dimethylallyladenosine synthase.